A 120-amino-acid polypeptide reads, in one-letter code: ATP-dependent Clp protease adapter protein ClpS (120 aa).

Residues leucine 9–lysine 32 form a disordered region.

The protein belongs to the ClpS family. In terms of assembly, binds to the N-terminal domain of the chaperone ClpA.

Involved in the modulation of the specificity of the ClpAP-mediated ATP-dependent protein degradation. This Ectopseudomonas mendocina (strain ymp) (Pseudomonas mendocina) protein is ATP-dependent Clp protease adapter protein ClpS.